The sequence spans 762 residues: MAMQEKYPTEGISHVTSPSSDVIQKGSSLGTEWQTPVISEPFRSRFSRCSSVADSGDTAIGTSCSDIAEDFCSSSGSPPFQPIKSHVTIPTAHVMPSTLGTSPAKPNSTPVGPSSSKLPLSGLAESVGMTRNGDLGAMKHSPGLSRDLMYFSGATGENGIEQSWFPAVGHERQEEARKFDIPSMESTLNQSAMMETLYSDPHHRVRFHNPRTSTSKELYRVLPEAKKAPGSGAVFERNGPHSNSSGVLPLGLQPAPGLSKPLPSQVWQPSPDTWHPREQSCELSTCRQQLELIRLQMEQMQLQNGAICHHPAAFGPSLPILEPAQWISILNSNEHLLKEKELLIDKQRKHISQLEQKVRESELQVHSALLGRPAPFGDVCLLRLQELQRENTFLRAQFAQKTEALSREKIDLEKKLSASEVEVQLIRESLKVALQKHSEEVKKQEERVKGRDKHINNLKKKCQKESEQNREKQQRIETLERYLADLPTLEDHQKQSQQLKDSELKSTELQEKVTELESLLEETQAICREKEIQLESLRQREAEFSSAGHSLQDKQSVEETSGEGPEVEMESWQKRYDSLQKIVEKQQQKMDQLRSQVQSLEQEVAQEEGTSQALREEAQRRDSALQQLRTAVKELSVQNQDLIEKNLTLQEHLRQAQPGSPPSPDTAQLALELHQELASCLQDLQAVCSIVTQRAQGHDPNLSLLLGIHSAQHPETQLDLQKPDVIKRKLEEVQQLRRDIEDLRTTMSDRYAQDMGENCVTQ.

Disordered stretches follow at residues 1–26 (MAMQEKYPTEGISHVTSPSSDVIQKG) and 94–119 (VMPSTLGTSPAKPNSTPVGPSSSKLP). Polar residues-rich tracts occupy residues 14–26 (HVTSPSSDVIQKG) and 98–111 (TLGTSPAKPNSTPV). Ser17 is modified (phosphoserine). Phosphoserine is present on residues Ser126 and Ser141. The tract at residues 257–433 (GLSKPLPSQV…QLIRESLKVA (177 aa)) is mediates interaction with NEK2 and is required for its function in the suppression of centrosome disjunction. 2 coiled-coil regions span residues 334–657 (EHLL…RQAQ) and 723–750 (PDVIKRKLEEVQQLRRDIEDLRTTMSDR). Residues 434-476 (LQKHSEEVKKQEERVKGRDKHINNLKKKCQKESEQNREKQQRI) are required for centrosome localization and for its function in the suppression of centrosome disjunction. Basic and acidic residues-rich tracts occupy residues 443-455 (KQEERVKGRDKHI) and 463-474 (QKESEQNREKQQ). Disordered regions lie at residues 443-474 (KQEERVKGRDKHINNLKKKCQKESEQNREKQQ) and 541-570 (EAEFSSAGHSLQDKQSVEETSGEGPEVEME). Position 623 is a phosphoserine (Ser623).

This sequence belongs to the CEP85 family. In terms of assembly, homodimer. Interacts with STIL (via N-terminus); this interaction is essential for robust PLK4 activation and efficient centriole assembly and for PLK4-dependent cell migration. Interacts with PLK4; required for CEP85 to be able to drive centriole duplication and cell migration.

The protein localises to the cytoplasm. It localises to the cytoskeleton. Its subcellular location is the microtubule organizing center. It is found in the centrosome. The protein resides in the spindle pole. The protein localises to the nucleus. It localises to the nucleolus. Its subcellular location is the centriole. It is found in the cell cortex. Acts as a regulator of centriole duplication through a direct interaction with STIL, a key factor involved in the early steps of centriole formation. The CEP85-STIL protein complex acts as a modulator of PLK4-driven cytoskeletal rearrangements and directional cell motility. Acts as a negative regulator of NEK2 to maintain the centrosome integrity in interphase. Suppresses centrosome disjunction by inhibiting NEK2 kinase activity. The protein is Centrosomal protein of 85 kDa of Homo sapiens (Human).